The following is a 101-amino-acid chain: Small ribosomal subunit protein uS14 (101 aa).

Belongs to the universal ribosomal protein uS14 family. In terms of assembly, part of the 30S ribosomal subunit. Contacts proteins S3 and S10.

In terms of biological role, binds 16S rRNA, required for the assembly of 30S particles and may also be responsible for determining the conformation of the 16S rRNA at the A site. In Leptothrix cholodnii (strain ATCC 51168 / LMG 8142 / SP-6) (Leptothrix discophora (strain SP-6)), this protein is Small ribosomal subunit protein uS14.